Consider the following 290-residue polypeptide: Membrane protein insertase YidC (290 aa).

Positions 1 to 19 (MKKKTLLPLFLGIMVFLAG) are cleaved as a signal peptide. C20 carries N-palmitoyl cysteine lipidation. C20 is lipidated: S-diacylglycerol cysteine. The next 5 helical transmembrane spans lie at 56–76 (YGLAIIILVLVIRIILLPFML), 134–154 (MLGCLPMLIQLPIIMGLYFVL), 176–196 (PDIWITIIAGVLYFIQAYVSS), 207–224 (GYMMMVISPIMIIWISLS), and 229–251 (LGLYWSVSAAFLVVQTHFANIYY). Residues 270–290 (HNGGSNKKGKNTQVVSKKKKK) form a disordered region.

The protein belongs to the OXA1/ALB3/YidC family. Type 2 subfamily.

Its subcellular location is the cell membrane. Functionally, required for the insertion and/or proper folding and/or complex formation of integral membrane proteins into the membrane. Involved in integration of membrane proteins that insert both dependently and independently of the Sec translocase complex, as well as at least some lipoproteins. The polypeptide is Membrane protein insertase YidC (Staphylococcus aureus (strain MRSA252)).